A 480-amino-acid polypeptide reads, in one-letter code: Endothelial transcription factor GATA-2 (480 aa).

Serine 73 is subject to Phosphoserine. Arginine 86 carries the asymmetric dimethylarginine modification. Residues 166 to 208 (SGSHLFGFPPTPPKEVSPDPSTTGAASPASPSAGGSVARGEDK) form a disordered region. Positions 183-201 (PDPSTTGAASPASPSAGGS) are enriched in low complexity. Serine 192 bears the Phosphoserine mark. 2 GATA-type zinc fingers span residues 295–319 (CVNC…CNAC) and 349–373 (CANC…CNAC). Lysine 389 is covalently cross-linked (Glycyl lysine isopeptide (Lys-Gly) (interchain with G-Cter in SUMO2)). The interval 457 to 480 (TPIHPSSSLSFGHPHPSSMVTAMG) is disordered.

As to quaternary structure, interacts with BRD3. Interacts with AR and CCAR1. Interacts with MDFIC.

It localises to the nucleus. In terms of biological role, transcriptional activator which regulates endothelin-1 gene expression in endothelial cells. Binds to the consensus sequence 5'-AGATAG-3'. Plays an important role in the regulation of phagocytosis in alveolar macrophages, particularly during P.carinii infection. This is Endothelial transcription factor GATA-2 from Rattus norvegicus (Rat).